An 80-amino-acid polypeptide reads, in one-letter code: Cell division protein ZapB (80 aa).

A coiled-coil region spans residues 3–80 (LEILEQLEAK…GLLGKMEEVE (78 aa)). The interval 41–62 (LEQANNGRSEVEQEAQKARDEQ) is disordered. A compositionally biased stretch (basic and acidic residues) spans 49-62 (SEVEQEAQKARDEQ).

Belongs to the ZapB family. Homodimer. The ends of the coiled-coil dimer bind to each other, forming polymers. Interacts with FtsZ.

The protein localises to the cytoplasm. Its function is as follows. Non-essential, abundant cell division factor that is required for proper Z-ring formation. It is recruited early to the divisome by direct interaction with FtsZ, stimulating Z-ring assembly and thereby promoting cell division earlier in the cell cycle. Its recruitment to the Z-ring requires functional FtsA or ZipA. This chain is Cell division protein ZapB, found in Aliivibrio salmonicida (strain LFI1238) (Vibrio salmonicida (strain LFI1238)).